The sequence spans 248 residues: MAMQLEICANSAASCRQAELGGATRVELCAGIPEGGTTPSAGEMAVARSLIAIPIHVIIRPRAGDFVYSSEEIEAMCYDIRVVRSLGMEGVVFGCLTPEGGYDEEANSRLLKEAQGMQLTFHRAFDVCAAPFEMLEKLIAAGFHRVLTSGCAPTALEGKDMIGALNKQATGRIGIMAGCGIRLGNIETLARHTGITQFHSSLRHDIPSSMRFRRPEVSMGGTVKIDEYSRPETSADMVRQAVDILQGI.

The protein belongs to the CutC family.

Its subcellular location is the cytoplasm. This is PF03932 family protein CutC from Porphyromonas gingivalis (strain ATCC BAA-308 / W83).